The following is a 228-amino-acid chain: Urease accessory protein UreF (228 aa).

It belongs to the UreF family. UreD, UreF and UreG form a complex that acts as a GTP-hydrolysis-dependent molecular chaperone, activating the urease apoprotein by helping to assemble the nickel containing metallocenter of UreC. The UreE protein probably delivers the nickel.

It is found in the cytoplasm. In terms of biological role, required for maturation of urease via the functional incorporation of the urease nickel metallocenter. In Photorhabdus laumondii subsp. laumondii (strain DSM 15139 / CIP 105565 / TT01) (Photorhabdus luminescens subsp. laumondii), this protein is Urease accessory protein UreF.